Here is a 226-residue protein sequence, read N- to C-terminus: Ribonuclease S-7 (226 aa).

A signal peptide spans 1 to 27; sequence MGITGMIYIVTMVFSLIVLILSSSTVG. Glutamine 36 lines the RNA pocket. Cysteine 42 and cysteine 49 are disulfide-bonded. Histidine 60 serves as a coordination point for RNA. Histidine 60 functions as the Proton donor in the catalytic mechanism. Residues asparagine 74 and asparagine 77 are each glycosylated (N-linked (GlcNAc...) asparagine; alternate). Cysteine 75 and cysteine 119 form a disulfide bridge. RNA-binding positions include 98 to 99, phenylalanine 108, 111 to 112, and 115 to 116; these read NV, KQ, and KH. Residue glutamine 112 is part of the active site. The active-site Proton acceptor is the histidine 116. Residues asparagine 126, asparagine 144, and asparagine 172 are each glycosylated (N-linked (GlcNAc...) asparagine). 2 disulfide bridges follow: cysteine 183–cysteine 220 and cysteine 198–cysteine 209.

This sequence belongs to the RNase T2 family. In terms of processing, the N-glycans attached at Asn-74 and Asn-77 consist of either monosaccharide (GlcNAc) or disaccharide (GlcNAc-GlcNAc) that could not be distinguished. The N-glycan at Asn-144 contains mannose and xylose, and at Asn-126 contains mannose, xylose and fucose. The N-glycan at Asn-172 consists of disaccharide (GlcNAc-GlcNAc).

It carries out the reaction a ribonucleotidyl-ribonucleotide-RNA + H2O = a 3'-end 3'-phospho-ribonucleotide-RNA + a 5'-end dephospho-ribonucleoside-RNA + H(+). Its function is as follows. Self-incompatibility (SI) is the inherited ability of a flowering plant to prevent self-fertilization by discriminating between self and non-self pollen during pollination. In many species, self-incompatibility is controlled by the single, multiallelic locus S. This chain is Ribonuclease S-7, found in Pyrus pyrifolia (Chinese pear).